Reading from the N-terminus, the 337-residue chain is Ketol-acid reductoisomerase (NADP(+)) (337 aa).

Residues 3–183 (VEMFYDADAD…GGARAGVIKT (181 aa)) form the KARI N-terminal Rossmann domain. NADP(+) contacts are provided by residues 26–29 (YGSQ), Lys-49, Ser-52, Ser-54, and 84–87 (DTAQ). The active site involves His-109. NADP(+) is bound at residue Gly-135. The 146-residue stretch at 184-329 (TFKDETETDL…KKLRDLMSWV (146 aa)) folds into the KARI C-terminal knotted domain. Positions 192, 196, 228, and 232 each coordinate Mg(2+). Ser-253 provides a ligand contact to substrate.

Belongs to the ketol-acid reductoisomerase family. The cofactor is Mg(2+).

The catalysed reaction is (2R)-2,3-dihydroxy-3-methylbutanoate + NADP(+) = (2S)-2-acetolactate + NADPH + H(+). It carries out the reaction (2R,3R)-2,3-dihydroxy-3-methylpentanoate + NADP(+) = (S)-2-ethyl-2-hydroxy-3-oxobutanoate + NADPH + H(+). It functions in the pathway amino-acid biosynthesis; L-isoleucine biosynthesis; L-isoleucine from 2-oxobutanoate: step 2/4. The protein operates within amino-acid biosynthesis; L-valine biosynthesis; L-valine from pyruvate: step 2/4. Functionally, involved in the biosynthesis of branched-chain amino acids (BCAA). Catalyzes an alkyl-migration followed by a ketol-acid reduction of (S)-2-acetolactate (S2AL) to yield (R)-2,3-dihydroxy-isovalerate. In the isomerase reaction, S2AL is rearranged via a Mg-dependent methyl migration to produce 3-hydroxy-3-methyl-2-ketobutyrate (HMKB). In the reductase reaction, this 2-ketoacid undergoes a metal-dependent reduction by NADPH to yield (R)-2,3-dihydroxy-isovalerate. The protein is Ketol-acid reductoisomerase (NADP(+)) of Mycolicibacterium gilvum (strain PYR-GCK) (Mycobacterium gilvum (strain PYR-GCK)).